The primary structure comprises 131 residues: Small ribosomal subunit protein uS8 (131 aa).

The protein belongs to the universal ribosomal protein uS8 family. As to quaternary structure, part of the 30S ribosomal subunit. Contacts proteins S5 and S12.

Its function is as follows. One of the primary rRNA binding proteins, it binds directly to 16S rRNA central domain where it helps coordinate assembly of the platform of the 30S subunit. This is Small ribosomal subunit protein uS8 from Parabacteroides distasonis (strain ATCC 8503 / DSM 20701 / CIP 104284 / JCM 5825 / NCTC 11152).